The following is a 240-amino-acid chain: MLHVVPLEWTVEEVVPYLERLAVWLRASVLVAFQLTATVALSVLSWWLMPPPVAELCERGRDDDPPSLSHLSLVVPVGCLFLLLRGPSIDRCPRKLPLLLAYCLPHALAFLTLLMCQPSPQAFVGAALLALAVDLSCLGASLLGCDPGASLRRLWLPSVLSLLCATALGLWLLRAAAPFFLGLHATTLLTVTLMLIHDLSLITCQSSFPESFQPSLRLYVENVALFIGMYHLLRLWLWSP.

The next 7 membrane-spanning stretches (helical) occupy residues 29–49 (VLVA…WWLM), 64–84 (DPPS…FLLL), 96–116 (LPLL…LLMC), 123–143 (FVGA…ASLL), 153–173 (RLWL…LWLL), 176–196 (AAPF…LMLI), and 218–238 (LYVE…LWLW).

Belongs to the cytomegalovirus US12 family.

It is found in the host membrane. The sequence is that of Transmembrane protein US19 (US19) from Human cytomegalovirus (strain Merlin) (HHV-5).